The following is a 232-amino-acid chain: 5'-methylthioadenosine/S-adenosylhomocysteine nucleosidase (232 aa).

Residue Glu-12 is the Proton acceptor of the active site. Residues Gly-78, Ile-152, and 173-174 (ME) each bind substrate. Asp-197 functions as the Proton donor in the catalytic mechanism.

Belongs to the PNP/UDP phosphorylase family. MtnN subfamily. In terms of assembly, homodimer.

The catalysed reaction is S-adenosyl-L-homocysteine + H2O = S-(5-deoxy-D-ribos-5-yl)-L-homocysteine + adenine. It catalyses the reaction S-methyl-5'-thioadenosine + H2O = 5-(methylsulfanyl)-D-ribose + adenine. The enzyme catalyses 5'-deoxyadenosine + H2O = 5-deoxy-D-ribose + adenine. It functions in the pathway amino-acid biosynthesis; L-methionine biosynthesis via salvage pathway; S-methyl-5-thio-alpha-D-ribose 1-phosphate from S-methyl-5'-thioadenosine (hydrolase route): step 1/2. Catalyzes the irreversible cleavage of the glycosidic bond in both 5'-methylthioadenosine (MTA) and S-adenosylhomocysteine (SAH/AdoHcy) to adenine and the corresponding thioribose, 5'-methylthioribose and S-ribosylhomocysteine, respectively. Also cleaves 5'-deoxyadenosine, a toxic by-product of radical S-adenosylmethionine (SAM) enzymes, into 5-deoxyribose and adenine. Thus, is required for in vivo function of the radical SAM enzymes biotin synthase and lipoic acid synthase, that are inhibited by 5'-deoxyadenosine accumulation. The polypeptide is 5'-methylthioadenosine/S-adenosylhomocysteine nucleosidase (Klebsiella pneumoniae subsp. pneumoniae (strain ATCC 700721 / MGH 78578)).